Consider the following 377-residue polypeptide: Nitric oxide reductase FlRd-NAD(+) reductase (377 aa).

It belongs to the FAD-dependent oxidoreductase family. FAD serves as cofactor.

It localises to the cytoplasm. It carries out the reaction 2 reduced [nitric oxide reductase rubredoxin domain] + NAD(+) + H(+) = 2 oxidized [nitric oxide reductase rubredoxin domain] + NADH. It participates in nitrogen metabolism; nitric oxide reduction. In terms of biological role, one of at least two accessory proteins for anaerobic nitric oxide (NO) reductase. Reduces the rubredoxin moiety of NO reductase. The polypeptide is Nitric oxide reductase FlRd-NAD(+) reductase (Salmonella paratyphi A (strain AKU_12601)).